A 285-amino-acid polypeptide reads, in one-letter code: Urease accessory protein UreD 1 (285 aa).

It belongs to the UreD family. In terms of assembly, ureD, UreF and UreG form a complex that acts as a GTP-hydrolysis-dependent molecular chaperone, activating the urease apoprotein by helping to assemble the nickel containing metallocenter of UreC. The UreE protein probably delivers the nickel.

It is found in the cytoplasm. Required for maturation of urease via the functional incorporation of the urease nickel metallocenter. The sequence is that of Urease accessory protein UreD 1 from Pseudomonas syringae pv. syringae (strain B728a).